Consider the following 299-residue polypeptide: Ribosomal RNA small subunit methyltransferase H (299 aa).

S-adenosyl-L-methionine contacts are provided by residues 24–26 (GGH), Asp43, Phe68, Asp90, and Gln97.

It belongs to the methyltransferase superfamily. RsmH family.

Its subcellular location is the cytoplasm. It catalyses the reaction cytidine(1402) in 16S rRNA + S-adenosyl-L-methionine = N(4)-methylcytidine(1402) in 16S rRNA + S-adenosyl-L-homocysteine + H(+). Functionally, specifically methylates the N4 position of cytidine in position 1402 (C1402) of 16S rRNA. This chain is Ribosomal RNA small subunit methyltransferase H, found in Francisella tularensis subsp. tularensis (strain WY96-3418).